The following is a 257-amino-acid chain: 3-deoxy-manno-octulosonate cytidylyltransferase (257 aa).

It belongs to the KdsB family.

The protein resides in the cytoplasm. The enzyme catalyses 3-deoxy-alpha-D-manno-oct-2-ulosonate + CTP = CMP-3-deoxy-beta-D-manno-octulosonate + diphosphate. It functions in the pathway nucleotide-sugar biosynthesis; CMP-3-deoxy-D-manno-octulosonate biosynthesis; CMP-3-deoxy-D-manno-octulosonate from 3-deoxy-D-manno-octulosonate and CTP: step 1/1. The protein operates within bacterial outer membrane biogenesis; lipopolysaccharide biosynthesis. In terms of biological role, activates KDO (a required 8-carbon sugar) for incorporation into bacterial lipopolysaccharide in Gram-negative bacteria. The chain is 3-deoxy-manno-octulosonate cytidylyltransferase from Methylococcus capsulatus (strain ATCC 33009 / NCIMB 11132 / Bath).